The primary structure comprises 95 residues: Acylphosphatase (95 aa).

The 87-residue stretch at 9–95 folds into the Acylphosphatase-like domain; sequence RLTAWVHGRV…KGGLTGFVER (87 aa). Residues Arg-24 and Asn-42 contribute to the active site.

Belongs to the acylphosphatase family.

The catalysed reaction is an acyl phosphate + H2O = a carboxylate + phosphate + H(+). The sequence is that of Acylphosphatase (acyP) from Saccharopolyspora erythraea (strain ATCC 11635 / DSM 40517 / JCM 4748 / NBRC 13426 / NCIMB 8594 / NRRL 2338).